The sequence spans 399 residues: Interferon regulatory factor 9 (399 aa).

A DNA-binding region (IRF tryptophan pentad repeat) is located at residues 9–116 (TRKLRSWIVE…EPYKVYRILP (108 aa)). The tract at residues 118 to 189 (GTLPNQPRNQ…CNSELEEGAG (72 aa)) is disordered. A compositionally biased stretch (polar residues) spans 120-129 (LPNQPRNQKS). Position 139 is a phosphoserine (Ser-139). The span at 148-157 (NGRTNGVVNH) shows a compositional bias: polar residues. Positions 171–189 (SNRSDSNSNCNSELEEGAG) are enriched in low complexity. A Phosphoserine modification is found at Ser-393.

The protein belongs to the IRF family. In terms of assembly, interacts with STAT2 in the cytoplasm. Forms the interferon-stimulated gene factor 3 complex (ISGF3) with the heterodimer STAT1:STAT2; upon stimulation.

Its subcellular location is the nucleus. Transcription factor that plays an essential role in anti-viral immunity. It mediates signaling by type I IFNs (IFN-alpha and IFN-beta). Following type I IFN binding to cell surface receptors, Jak kinases (TYK2 and JAK1) are activated, leading to tyrosine phosphorylation of STAT1 and STAT2. IRF9/ISGF3G associates with the phosphorylated STAT1:STAT2 dimer to form a complex termed ISGF3 transcription factor, that enters the nucleus. ISGF3 binds to the IFN stimulated response element (ISRE) to activate the transcription of interferon stimulated genes, which drive the cell in an antiviral state. The polypeptide is Interferon regulatory factor 9 (Irf9) (Mus musculus (Mouse)).